A 515-amino-acid polypeptide reads, in one-letter code: Centromere protein T (515 aa).

Disordered regions lie at residues 24-156 (ADSR…KRKQ) and 271-411 (LSGK…DPHK). Residues 29 to 44 (PMRRRSTRINAQRRRS) are compositionally biased toward basic residues. Over residues 45 to 58 (QTPYSNRQGSQTKT) the composition is skewed to polar residues. Phosphothreonine is present on T86. Residues 94–375 (ILLTAPESST…DSLPAEQPPP (282 aa)) form a flexible stalk domain region. Residues 296-306 (SSGTRLQSRMS) are compositionally biased toward polar residues. Phosphoserine is present on residues S313, S333, S345, S346, S357, and S376.

This sequence belongs to the CENP-T/CNN1 family. Component of the CENPA-CAD complex, composed of CENPI, CENPK, CENPL, CENPO, CENPP, CENPQ, CENPR and CENPS. The CENPA-CAD complex is probably recruited on centromeres by the CENPA-NAC complex, at least composed of CENPA, CENPC, CENPH, CENPM, CENPN, CENPT and CENPU. Identified in a centromeric complex containing histones H2A, H2B, H3 and H4, and at least CENPA, CENPB, CENPC, CENPT, CENPN, HJURP, SUPT16H, SSRP1 and RSF1. Interacts (via N-terminus) with the NDC80 complex. Heterodimer with CENPW; this dimer coassembles with CENPS-CENPX heterodimers at centromeres to form the tetrameric CENP-T-W-S-X complex. Dynamically phosphorylated during the cell cycle. Phosphorylated during G2 phase, metaphase and anaphase, but not during telophase or G1 phase.

The protein localises to the nucleus. Its subcellular location is the chromosome. It is found in the centromere. The protein resides in the kinetochore. Component of the CENPA-NAC (nucleosome-associated) complex, a complex that plays a central role in assembly of kinetochore proteins, mitotic progression and chromosome segregation. The CENPA-NAC complex recruits the CENPA-CAD (nucleosome distal) complex and may be involved in incorporation of newly synthesized CENPA into centromeres. Part of a nucleosome-associated complex that binds specifically to histone H3-containing nucleosomes at the centromere, as opposed to nucleosomes containing CENPA. Component of the heterotetrameric CENP-T-W-S-X complex that binds and supercoils DNA, and plays an important role in kinetochore assembly. CENPT has a fundamental role in kinetochore assembly and function. It is one of the inner kinetochore proteins, with most further proteins binding downstream. Required for normal chromosome organization and normal progress through mitosis. This Mus musculus (Mouse) protein is Centromere protein T (Cenpt).